The primary structure comprises 500 residues: Ribose import ATP-binding protein RbsA (500 aa).

ABC transporter domains follow at residues 6 to 242 and 252 to 495; these read LALS…VGRK and AQQG…VGRN. An ATP-binding site is contributed by 38 to 45; sequence GENGAGKS.

This sequence belongs to the ABC transporter superfamily. Ribose importer (TC 3.A.1.2.1) family. In terms of assembly, the complex is composed of an ATP-binding protein (RbsA), two transmembrane proteins (RbsC) and a solute-binding protein (RbsB).

It is found in the cell inner membrane. It catalyses the reaction D-ribose(out) + ATP + H2O = D-ribose(in) + ADP + phosphate + H(+). Functionally, part of the ABC transporter complex RbsABC involved in ribose import. Responsible for energy coupling to the transport system. This Vibrio cholerae serotype O1 (strain ATCC 39315 / El Tor Inaba N16961) protein is Ribose import ATP-binding protein RbsA.